Here is a 393-residue protein sequence, read N- to C-terminus: DNA/RNA-binding protein KIN17 (393 aa).

The C2H2-type zinc finger occupies 28–50 (CQMCQKQCRDENGFKCHCMSESH). The winged helix-turn-helix (wHTH) stretch occupies residues 51 to 160 (QRQLLLASEN…RQLELEKKKK (110 aa)). Lys135 carries the N6,N6,N6-trimethyllysine; by METTL22; in vitro modification. The residue at position 135 (Lys135) is an N6-methyllysine. Residues 147–180 (ETIRRQLELEKKKKQDLDDEEKTAKFIEEQVRRG) adopt a coiled-coil conformation. A compositionally biased stretch (low complexity) spans 209-224 (KGACSSSGATSSKSST). Residues 209 to 260 (KGACSSSGATSSKSSTLGPSALKTIGSSASVKRKESSQSSTQSKEKKKKKSA) are disordered. The stretch at 250 to 277 (QSKEKKKKKSALDEIMEIEEEKKRTART) forms a coiled coil. The segment at 284–334 (EIIVKIITKKLGEKYHKKKAIVKEVIDKYTAVVKMIDSGDKLKLDQTHLET) is C-terminal subdomain A. A C-terminal subdomain B region spans residues 340 to 391 (GKRILVLNGGYRGNEGTLESINEKTFSATIVIETGPLKGRRVEGIQYEDISK).

It belongs to the KIN17 family. As to quaternary structure, associated with DNA polymerase alpha, RFC1 and cyclin A, in multiprotein DNA replication complexes. Also associates with replication origins at the G1/S phase boundary and throughout the S phase in vivo. In terms of assembly, (Microbial infection) Interacts with SV40 large T antigen. In terms of tissue distribution, ubiquitously expressed in all tissues examined, with highest levels in skeletal muscle, heart and testis. Differentially expressed in non-tumorigenic and tumorigenic cell lines. Highly expressed in proliferating epithelial keratinocyte cells in vitro (at protein level).

The protein localises to the nucleus. It localises to the cytoplasm. In terms of biological role, involved in DNA replication and the cellular response to DNA damage. May participate in DNA replication factories and create a bridge between DNA replication and repair mediated by high molecular weight complexes. May play a role in illegitimate recombination and regulation of gene expression. May participate in mRNA processing. Binds, in vitro, to double-stranded DNA. Also shown to bind preferentially to curved DNA in vitro and in vivo. Binds via its C-terminal domain to RNA in vitro. In Homo sapiens (Human), this protein is DNA/RNA-binding protein KIN17.